Here is a 249-residue protein sequence, read N- to C-terminus: Protein YIP5 (249 aa).

The next 5 helical transmembrane spans lie at 87 to 107 (LYGP…SNSI), 131 to 151 (ASII…ILVW), 164 to 184 (LYGY…PFGL), 188 to 208 (LASH…SIVF), and 228 to 248 (LLFG…LIFF).

It belongs to the YIP1 family. In terms of assembly, interacts with the YIP1 family members yip1 and yip4, and several Rab GTPases. The C-terminal cysteines in the Rab GTPase ypt2 are essential for the interaction. Interacts with snx3.

It is found in the membrane. Its function is as follows. Possible role in vesicle-mediated transport. May be involved in proper membrane localization of Rab GTPases. The polypeptide is Protein YIP5 (Schizosaccharomyces pombe (strain 972 / ATCC 24843) (Fission yeast)).